The sequence spans 239 residues: 2-C-methyl-D-erythritol 4-phosphate cytidylyltransferase (239 aa).

It belongs to the IspD/TarI cytidylyltransferase family. IspD subfamily.

It catalyses the reaction 2-C-methyl-D-erythritol 4-phosphate + CTP + H(+) = 4-CDP-2-C-methyl-D-erythritol + diphosphate. Its pathway is isoprenoid biosynthesis; isopentenyl diphosphate biosynthesis via DXP pathway; isopentenyl diphosphate from 1-deoxy-D-xylulose 5-phosphate: step 2/6. Functionally, catalyzes the formation of 4-diphosphocytidyl-2-C-methyl-D-erythritol from CTP and 2-C-methyl-D-erythritol 4-phosphate (MEP). In Acinetobacter baylyi (strain ATCC 33305 / BD413 / ADP1), this protein is 2-C-methyl-D-erythritol 4-phosphate cytidylyltransferase.